Reading from the N-terminus, the 216-residue chain is SPbeta prophage-derived uncharacterized protein YomX (216 aa).

The chain is SPbeta prophage-derived uncharacterized protein YomX (yomX) from Bacillus subtilis (strain 168).